We begin with the raw amino-acid sequence, 346 residues long: tRNA N6-adenosine threonylcarbamoyltransferase (346 aa).

Fe cation-binding residues include H111 and H115. Substrate-binding positions include 134 to 138 (LVSGG), D167, G180, and N279. D307 serves as a coordination point for Fe cation.

It belongs to the KAE1 / TsaD family. It depends on Fe(2+) as a cofactor.

The protein localises to the cytoplasm. The enzyme catalyses L-threonylcarbamoyladenylate + adenosine(37) in tRNA = N(6)-L-threonylcarbamoyladenosine(37) in tRNA + AMP + H(+). Its function is as follows. Required for the formation of a threonylcarbamoyl group on adenosine at position 37 (t(6)A37) in tRNAs that read codons beginning with adenine. Is involved in the transfer of the threonylcarbamoyl moiety of threonylcarbamoyl-AMP (TC-AMP) to the N6 group of A37, together with TsaE and TsaB. TsaD likely plays a direct catalytic role in this reaction. This chain is tRNA N6-adenosine threonylcarbamoyltransferase, found in Burkholderia ambifaria (strain MC40-6).